The chain runs to 230 residues: Potassium/proton antiporter CemA (230 aa).

Transmembrane regions (helical) follow at residues 7 to 27 (LPSL…SSSF), 106 to 126 (IILH…SFFL), 145 to 165 (LNDS…VGFH), and 181 to 201 (FGWA…PVIL).

Belongs to the CemA family.

It localises to the plastid. The protein localises to the chloroplast inner membrane. The enzyme catalyses K(+)(in) + H(+)(out) = K(+)(out) + H(+)(in). Functionally, contributes to K(+)/H(+) antiport activity by supporting proton efflux to control proton extrusion and homeostasis in chloroplasts in a light-dependent manner to modulate photosynthesis. Prevents excessive induction of non-photochemical quenching (NPQ) under continuous-light conditions. Indirectly promotes efficient inorganic carbon uptake into chloroplasts. In Hordeum vulgare (Barley), this protein is Potassium/proton antiporter CemA.